We begin with the raw amino-acid sequence, 117 residues long: DNA-directed RNA polymerase II subunit RPB11 (117 aa).

It belongs to the archaeal Rpo11/eukaryotic RPB11/RPC19 RNA polymerase subunit family. In terms of assembly, component of the RNA polymerase II (Pol II) complex consisting of 12 subunits.

It is found in the nucleus. Its function is as follows. DNA-dependent RNA polymerase catalyzes the transcription of DNA into RNA using the four ribonucleoside triphosphates as substrates. Component of RNA polymerase II which synthesizes mRNA precursors and many functional non-coding RNAs. Pol II is the central component of the basal RNA polymerase II transcription machinery. It is composed of mobile elements that move relative to each other. RPB11 is part of the core element with the central large cleft. The protein is DNA-directed RNA polymerase II subunit RPB11 of Drosophila melanogaster (Fruit fly).